The following is a 322-amino-acid chain: Picrinine-N-methytransferase (322 aa).

Residues 103 to 112 (MLDVGCGLGG) form an SAM motif I region. Residues 166-174 (GTFDLVFTI) are SAM motif II. The tract at residues 193 to 202 (VAAPGAPVVI) is SAM motif III.

It belongs to the class I-like SAM-binding methyltransferase superfamily. gTMT family. In terms of assembly, homodimer. Accumulates in tissues actively synthesizing monoterpenoid indole alkaloids (MIAs) (at protein level). Mainly expressed in young leaves, but barely in roots and stems.

It localises to the cytoplasm. The protein resides in the cytosol. It catalyses the reaction picrinine + S-adenosyl-L-methionine = ervincine + S-adenosyl-L-homocysteine + H(+). It functions in the pathway alkaloid biosynthesis; vindoline biosynthesis. Its function is as follows. S-adenosyl-L-methionine-dependent N-methyltransferase involved in the biosynthesis of biologically active monoterpenoid indole alkaloids (MIAs) natural products including vindoline. Catalyzes the conversion of picrinine to N-methylpicrinine (ervincine). Also accepts, with low efficiency, 21-hydroxycyclolochnericine and norajmaline as substrates. This Vinca minor (Common periwinkle) protein is Picrinine-N-methytransferase.